A 526-amino-acid polypeptide reads, in one-letter code: ATP synthase subunit alpha (526 aa).

171-178 contacts ATP; sequence GDRQVGKT.

This sequence belongs to the ATPase alpha/beta chains family. F-type ATPases have 2 components, CF(1) - the catalytic core - and CF(0) - the membrane proton channel. CF(1) has five subunits: alpha(3), beta(3), gamma(1), delta(1), epsilon(1). CF(0) has three main subunits: a(1), b(2) and c(9-12). The alpha and beta chains form an alternating ring which encloses part of the gamma chain. CF(1) is attached to CF(0) by a central stalk formed by the gamma and epsilon chains, while a peripheral stalk is formed by the delta and b chains.

The protein resides in the cell inner membrane. The catalysed reaction is ATP + H2O + 4 H(+)(in) = ADP + phosphate + 5 H(+)(out). Produces ATP from ADP in the presence of a proton gradient across the membrane. The alpha chain is a regulatory subunit. This Azobacteroides pseudotrichonymphae genomovar. CFP2 protein is ATP synthase subunit alpha.